A 385-amino-acid chain; its full sequence is Glucans biosynthesis protein C (385 aa).

10 helical membrane passes run 17 to 37, 60 to 80, 91 to 111, 137 to 157, 173 to 193, 212 to 232, 239 to 259, 274 to 294, 311 to 331, and 338 to 358; these read AWLM…SHTW, MLVF…RYPL, VGIP…IMLQ, ISHL…VWIF, KFSM…YAVI, FIVM…LAFI, LFTT…VAYL, TESV…FSFG, ASLF…AYIT, and WLGF…LYEI.

The protein belongs to the acyltransferase 3 family. OpgC subfamily.

It is found in the cell membrane. Its pathway is glycan metabolism; osmoregulated periplasmic glucan (OPG) biosynthesis. In terms of biological role, necessary for the succinyl substitution of periplasmic glucans. Could catalyze the transfer of succinyl residues from the cytoplasmic side of the membrane to the nascent glucan backbones on the periplasmic side of the membrane. The polypeptide is Glucans biosynthesis protein C (Shigella boydii serotype 4 (strain Sb227)).